A 465-amino-acid polypeptide reads, in one-letter code: Cysteine--tRNA ligase (465 aa).

Position 27 (Cys27) interacts with Zn(2+). Residues 29-39 carry the 'HIGH' region motif; sequence PTVYDDAHLGH. Zn(2+) contacts are provided by Cys207, His237, and Glu241. The 'KMSKS' region signature appears at 269–273; it reads KMSKS. Residue Lys272 participates in ATP binding.

It belongs to the class-I aminoacyl-tRNA synthetase family. In terms of assembly, monomer. Zn(2+) is required as a cofactor.

It is found in the cytoplasm. The catalysed reaction is tRNA(Cys) + L-cysteine + ATP = L-cysteinyl-tRNA(Cys) + AMP + diphosphate. The chain is Cysteine--tRNA ligase from Helicobacter pylori (strain P12).